Here is a 183-residue protein sequence, read N- to C-terminus: Dual-action ribosomal maturation protein DarP (183 aa).

This sequence belongs to the DarP family.

It localises to the cytoplasm. In terms of biological role, member of a network of 50S ribosomal subunit biogenesis factors which assembles along the 30S-50S interface, preventing incorrect 23S rRNA structures from forming. Promotes peptidyl transferase center (PTC) maturation. This chain is Dual-action ribosomal maturation protein DarP, found in Shigella flexneri serotype 5b (strain 8401).